A 572-amino-acid chain; its full sequence is Urease subunit alpha (572 aa).

Positions 139, 141, and 222 each coordinate Ni(2+). Lys222 carries the post-translational modification N6-carboxylysine. His224 provides a ligand contact to substrate. His251 and His277 together coordinate Ni(2+). His325 acts as the Proton donor in catalysis. Asp365 provides a ligand contact to Ni(2+).

This sequence belongs to the metallo-dependent hydrolases superfamily. Urease alpha subunit family. As to quaternary structure, heterotrimer of UreA (gamma), UreB (beta) and UreC (alpha) subunits. Three heterotrimers associate to form the active enzyme. Ni cation serves as cofactor. In terms of processing, carboxylation allows a single lysine to coordinate two nickel ions.

The protein localises to the cytoplasm. It carries out the reaction urea + 2 H2O + H(+) = hydrogencarbonate + 2 NH4(+). Its pathway is nitrogen metabolism; urea degradation; CO(2) and NH(3) from urea (urease route): step 1/1. In Acetivibrio thermocellus (strain ATCC 27405 / DSM 1237 / JCM 9322 / NBRC 103400 / NCIMB 10682 / NRRL B-4536 / VPI 7372) (Clostridium thermocellum), this protein is Urease subunit alpha.